We begin with the raw amino-acid sequence, 403 residues long: Aminomethyltransferase, mitochondrial (403 aa).

Residues 1–28 constitute a mitochondrion transit peptide; that stretch reads MQRAVSVVARLGFRLQAFPPALCRPLSC. Residues Glu232, Arg261, and Tyr399 each coordinate substrate.

It belongs to the GcvT family. The glycine cleavage system is composed of four proteins: P, T, L and H.

The protein resides in the mitochondrion. It carries out the reaction N(6)-[(R)-S(8)-aminomethyldihydrolipoyl]-L-lysyl-[protein] + (6S)-5,6,7,8-tetrahydrofolate = N(6)-[(R)-dihydrolipoyl]-L-lysyl-[protein] + (6R)-5,10-methylene-5,6,7,8-tetrahydrofolate + NH4(+). In terms of biological role, the glycine cleavage system catalyzes the degradation of glycine. The protein is Aminomethyltransferase, mitochondrial of Homo sapiens (Human).